We begin with the raw amino-acid sequence, 201 residues long: MEIEDKIRKAYEESVRVKEQFFRENISLIKEVAEIIAKSLNEGGKILIFGNGGSATDASHIAAEFVNRFKRERPGLPAIALNTDMAVLTAIANDYDYSEIFAKQVKALGESGDIVIGISTSGSSRNVIKAIEVAKKRGLKSIAFTSKKGEKLISKVDYAFAVPSEDTPRIQETHITLGHILCELVEDILFEIPAAKKKLKQ.

The 160-residue stretch at 36–195 folds into the SIS domain; the sequence is IAKSLNEGGK…EDILFEIPAA (160 aa). 51–53 contributes to the substrate binding site; the sequence is NGG. Positions 60 and 64 each coordinate Zn(2+). Substrate contacts are provided by residues E64, 93–94, 119–121, S124, and Q171; these read ND and STS. 2 residues coordinate Zn(2+): Q171 and H179.

The protein belongs to the SIS family. GmhA subfamily. Zn(2+) serves as cofactor.

It localises to the cytoplasm. The enzyme catalyses 2 D-sedoheptulose 7-phosphate = D-glycero-alpha-D-manno-heptose 7-phosphate + D-glycero-beta-D-manno-heptose 7-phosphate. It participates in carbohydrate biosynthesis; D-glycero-D-manno-heptose 7-phosphate biosynthesis; D-glycero-alpha-D-manno-heptose 7-phosphate and D-glycero-beta-D-manno-heptose 7-phosphate from sedoheptulose 7-phosphate: step 1/1. Catalyzes the isomerization of sedoheptulose 7-phosphate in D-glycero-D-manno-heptose 7-phosphate. The sequence is that of Phosphoheptose isomerase from Thermodesulfovibrio yellowstonii (strain ATCC 51303 / DSM 11347 / YP87).